The chain runs to 69 residues: Protein SlyX homolog (69 aa).

It belongs to the SlyX family.

This chain is Protein SlyX homolog, found in Pseudomonas aeruginosa (strain LESB58).